Reading from the N-terminus, the 309-residue chain is Olfactory receptor 5H2 (309 aa).

Topologically, residues 1-28 are extracellular; sequence MEQDNTTLLTEFVLTGLTYQPEWKMPLF. N5 is a glycosylation site (N-linked (GlcNAc...) asparagine). Residues 29–49 traverse the membrane as a helical segment; it reads LVFLVIYLITIVWNLGLIALI. The Cytoplasmic segment spans residues 50 to 56; it reads WNDPQLH. A helical transmembrane segment spans residues 57–77; that stretch reads IPMYFFLGSLAFVDAWISSTV. Over 78–97 the chain is Extracellular; that stretch reads TPKMLVNFLAKNRMISLSEC. C97 and C179 form a disulfide bridge. The helical transmembrane segment at 98-118 threads the bilayer; sequence MIQFFSFAFGGTTECFLLATM. Residues 119-143 are Cytoplasmic-facing; the sequence is AYDRYVAICKPLLYPVIMNNSLCIR. A helical membrane pass occupies residues 144 to 164; it reads LLAFSFLGGFLHALIHEVLIF. Residues 165–193 are Extracellular-facing; that stretch reads RLTFCNSNIIHHFYCDIIPLFMISCTDPS. A helical membrane pass occupies residues 194–214; the sequence is INFLMVFILSGSIQVFTIVTV. Residues 215–239 are Cytoplasmic-facing; that stretch reads LNSYTFALFTILKKKSVRGVRKAFS. A helical membrane pass occupies residues 240 to 260; that stretch reads TCGAHLLSVSLYYGPLIFMYL. The Extracellular portion of the chain corresponds to 261 to 271; the sequence is RPASPQADDQD. The helical transmembrane segment at 272 to 292 threads the bilayer; it reads MIDSVFYTIIIPLLNPIIYSL. Residues 293-309 lie on the Cytoplasmic side of the membrane; sequence RNKQVIDSFTKMVKRNV.

Belongs to the G-protein coupled receptor 1 family.

The protein localises to the cell membrane. Functionally, odorant receptor. In Homo sapiens (Human), this protein is Olfactory receptor 5H2 (OR5H2).